The chain runs to 145 residues: Superoxide dismutase [Mn/Fe] (145 aa).

The Fe(3+) site is built by H10 and H64. Mn(2+) contacts are provided by H10 and H64.

This sequence belongs to the iron/manganese superoxide dismutase family. It depends on Mn(2+) as a cofactor. Requires Fe(3+) as cofactor.

The catalysed reaction is 2 superoxide + 2 H(+) = H2O2 + O2. Destroys superoxide anion radicals which are normally produced within the cells and which are toxic to biological systems. Catalyzes the dismutation of superoxide anion radicals into O2 and H2O2 by successive reduction and oxidation of the transition metal ion at the active site. The polypeptide is Superoxide dismutase [Mn/Fe] (sodA) (Streptococcus alactolyticus).